Consider the following 450-residue polypeptide: Phosphoglucosamine mutase (450 aa).

The active-site Phosphoserine intermediate is S101. Mg(2+) is bound by residues S101, D240, D242, and D244. A Phosphoserine modification is found at S101.

This sequence belongs to the phosphohexose mutase family. It depends on Mg(2+) as a cofactor. Post-translationally, activated by phosphorylation.

It carries out the reaction alpha-D-glucosamine 1-phosphate = D-glucosamine 6-phosphate. Its function is as follows. Catalyzes the conversion of glucosamine-6-phosphate to glucosamine-1-phosphate. The polypeptide is Phosphoglucosamine mutase (Streptococcus thermophilus (strain ATCC BAA-250 / LMG 18311)).